A 400-amino-acid chain; its full sequence is Delta(12) fatty acid desaturase (400 aa).

Residues 91–111 (LAWPAYWIMQGIVCTGIWVLA) form a helical membrane-spanning segment. The Histidine box-1 signature appears at 112–116 (HECGH). The short motif at 148-152 (HSKHH) is the Histidine box-2 element. Helical transmembrane passes span 199–219 (IVTLFWMVIQFLFGWPAYLIM), 245–265 (FFDIIISDLGVLAALGALIYA), and 277–297 (YYIIPYLFVNFWLVLITFLQH). The Histidine box-3 motif lies at 339-343 (HVAHH).

Belongs to the fatty acid desaturase type 1 family.

The protein localises to the membrane. It catalyses the reaction (9Z)-octadecenoyl-CoA + 2 Fe(II)-[cytochrome b5] + O2 + 2 H(+) = (9Z,12Z)-octadecadienoyl-CoA + 2 Fe(III)-[cytochrome b5] + 2 H2O. It carries out the reaction (9Z)-hexadecenoyl-CoA + 2 Fe(II)-[cytochrome b5] + O2 + 2 H(+) = (9Z,12Z)-hexadecadienoyl-CoA + 2 Fe(III)-[cytochrome b5] + 2 H2O. It participates in lipid metabolism; polyunsaturated fatty acid biosynthesis. Catalyzes the desaturation of oleic acid (Delta(9)-18:1) to linoleic acid (Delta(9), Delta(12)-18:2). The chain is Delta(12) fatty acid desaturase from Mortierella isabellina (Filamentous fungus).